A 104-amino-acid chain; its full sequence is Small ribosomal subunit protein uS10 (104 aa).

It belongs to the universal ribosomal protein uS10 family. In terms of assembly, part of the 30S ribosomal subunit.

Its function is as follows. Involved in the binding of tRNA to the ribosomes. The polypeptide is Small ribosomal subunit protein uS10 (Maricaulis maris (strain MCS10) (Caulobacter maris)).